The sequence spans 670 residues: Soluble lamin-associated protein of 75 kDa (670 aa).

Disordered stretches follow at residues 273–301 (PKRP…SSEM) and 314–670 (STSE…AKLT). Ser350 is subject to Phosphoserine. Positions 358 to 375 (SQTSLTASINKLESTARP) are enriched in polar residues. A compositionally biased stretch (acidic residues) spans 378-387 (SSEEFLEEEP). The residue at position 379 (Ser379) is a Phosphoserine. Basic and acidic residues predominate over residues 414–423 (EKQDGEKESE). Positions 442–453 (TEEEDSTSEVLD) are enriched in acidic residues. Ser449 is subject to Phosphoserine. Positions 460 to 470 (PFNSSEDSTNL) are enriched in polar residues. Composition is skewed to basic and acidic residues over residues 479-494 (KPPE…RIPD) and 504-514 (SDEKGHMEEKL). Phosphoserine is present on Ser515. Composition is skewed to polar residues over residues 558–569 (ENLSPNTTSSLE) and 579–591 (PQET…QSSL). 3 positions are modified to phosphoserine: Ser615, Ser618, and Ser635. Residues 651–670 (NLRRKAKGHKGPAKKKAKLT) show a composition bias toward basic residues.

Belongs to the FAM169 family.

It is found in the nucleus envelope. The protein resides in the nucleus inner membrane. The chain is Soluble lamin-associated protein of 75 kDa (FAM169A) from Homo sapiens (Human).